The following is a 976-amino-acid chain: Alpha-amylase (976 aa).

An N-terminal signal peptide occupies residues 1–33 (MKRGKLWGRLVSAAGLSLSIFLSSIGNVSTAYA). Positions 45-98 (TKENTESATDASSNEASDAEADNDTDEAITDASSKELSAENDGASESDSSFDEY) are disordered. The segment covering 50–60 (ESATDASSNEA) has biased composition (low complexity). Composition is skewed to acidic residues over residues 61–73 (SDAEADNDTDEAI) and 87–96 (GASESDSSFD). Ca(2+) is bound by residues Asn-243, Thr-284, and Asp-293. The active-site Nucleophile is the Asp-323. Residue His-327 participates in Ca(2+) binding. The active-site Proton donor is Glu-375.

Belongs to the glycosyl hydrolase 13 family. As to quaternary structure, monomer. Ca(2+) is required as a cofactor.

The enzyme catalyses Endohydrolysis of (1-&gt;4)-alpha-D-glucosidic linkages in polysaccharides containing three or more (1-&gt;4)-alpha-linked D-glucose units.. This Butyrivibrio fibrisolvens protein is Alpha-amylase (amyA).